The chain runs to 679 residues: Shutoff protein (679 aa).

The segment at 178-232 (LFDYLIGESQDPNDLDSEYKLAFTDEDLPQEGQAEKTKQRETLGAVATFGAVLLS) is binding to host EIF4G. The 119-residue stretch at 235-353 (RLFTHPVVIK…ELAGANYAEA (119 aa)) folds into the RRM domain. 2 positions are modified to phosphotyrosine; by host: Tyr252 and Tyr564. The interval 552–679 (REKSILKRGG…SLQGTRRESS (128 aa)) is disordered. The segment covering 661–679 (PRQETAEKESLQGTRRESS) has biased composition (basic and acidic residues).

It belongs to the adenoviridae shutoff protein family. Monomer. Interacts with hexon protein; this interaction allows chaperoning and trimerization of hexon proteins. Interacts (via N-terminus) with host initiation factor EIF4G (via C-terminus). Interacts (via RRM domain) with viral mRNAs that contain the tripartite leader; this interaction allows ribosome shunting and expression of viral late mRNAs. Post-translationally, might be cleaved by the viral protease. In terms of processing, phosphorylated. Tyrosine phosphorylation enhances preferential binding to tripartite leader mRNAs and allows ribosome shunting. Methylated. Asymmetric dimethylation by host PRMT1 of the Arg/Gly-rich region may regulate shutoff protein binding to hexon and promote the capsid assembly in the nucleus.

The protein localises to the host cytoplasm. Functionally, protein that inhibits host translation while promoting late viral translation by ribosome shunting. Blocks host cap-dependent translation by binding to eIF4G, displacing MKNK1 from cap initiation complexes and preventing EIF4E phosphorylation. Binds to the tripartite leader sequence of viral late mRNAs and recruits host eIF4G, PABPC1/poly-A binding protein and 40S ribosomes subunits on viral mRNAs, allowing ribosome shunting and efficient translation of late viral mRNAs even though conventional translation via ribosome scanning from the cap has been shut off in the host cell. During assembly, acts as a chaperone protein that helps hexon proteins assembly into trimers. The polypeptide is Shutoff protein (Snake adenovirus serotype 1 (SnAdV-1)).